The following is a 496-amino-acid chain: probable leucine aminopeptidase 2 (496 aa).

An N-terminal signal peptide occupies residues methionine 1 to glycine 16. Positions proline 111 to lysine 205 constitute a PA domain. Residue asparagine 224 is glycosylated (N-linked (GlcNAc...) asparagine). Histidine 248 and aspartate 260 together coordinate Zn(2+). Catalysis depends on glutamate 292, which acts as the Proton acceptor. Position 293 (glutamate 293) interacts with Zn(2+). Asparagine 307 is a glycosylation site (N-linked (GlcNAc...) asparagine). Aspartate 321 is a binding site for Zn(2+). N-linked (GlcNAc...) asparagine glycosylation is found at asparagine 341 and asparagine 402. A Zn(2+)-binding site is contributed by histidine 419. N-linked (GlcNAc...) asparagine glycans are attached at residues asparagine 424 and asparagine 458. Residues lysine 475 to alanine 496 form a disordered region.

The protein belongs to the peptidase M28 family. M28A subfamily. As to quaternary structure, monomer. The cofactor is Zn(2+).

Its subcellular location is the secreted. Its function is as follows. Extracellular aminopeptidase that releases a wide variety of amino acids from natural peptides. This chain is probable leucine aminopeptidase 2 (lap2), found in Aspergillus oryzae (strain ATCC 42149 / RIB 40) (Yellow koji mold).